The chain runs to 89 residues: MSLTASEKQVLMSEYQVHETDTGSADLQVAILTKRITQLTDHLKQNPKDHASRRGLLKMIGRRRRLLGYINKKDSNRYQTLIKRLGIRR.

It belongs to the universal ribosomal protein uS15 family. In terms of assembly, part of the 30S ribosomal subunit. Forms a bridge to the 50S subunit in the 70S ribosome, contacting the 23S rRNA.

Its function is as follows. One of the primary rRNA binding proteins, it binds directly to 16S rRNA where it helps nucleate assembly of the platform of the 30S subunit by binding and bridging several RNA helices of the 16S rRNA. Functionally, forms an intersubunit bridge (bridge B4) with the 23S rRNA of the 50S subunit in the ribosome. In Crocosphaera subtropica (strain ATCC 51142 / BH68) (Cyanothece sp. (strain ATCC 51142)), this protein is Small ribosomal subunit protein uS15.